The chain runs to 185 residues: Transmembrane protein 140 (185 aa).

Over Met1–Gln11 the chain is Cytoplasmic. The helical transmembrane segment at Leu12–Leu32 threads the bilayer. At Leu33–Arg77 the chain is on the extracellular side. N-linked (GlcNAc...) asparagine glycosylation is present at Asn38. A helical membrane pass occupies residues Val78–Pro98. Residues Gln99–Arg114 lie on the Cytoplasmic side of the membrane. The helical transmembrane segment at Leu115–Leu135 threads the bilayer. At Ser136–Gly150 the chain is on the extracellular side. A helical membrane pass occupies residues Phe151–Phe171. Over Pro172–Cys185 the chain is Cytoplasmic.

As to expression, expression significantly higher in gliomas than in normal brain tissues.

It localises to the membrane. In Homo sapiens (Human), this protein is Transmembrane protein 140 (TMEM140).